A 122-amino-acid polypeptide reads, in one-letter code: MDYEFKKNTLEGTYHANFSMGHEAMGRWLVEDVAKNTDLLAEIYKHIALIKNTQDEWTLSGKVMTLVLSDQEVIVQENALFEQSDEEFEEDIHMYDDECISVCGLEDFETMLQSWEAFINRF.

This sequence belongs to the UPF0231 family.

This is UPF0231 protein VF_2154 from Aliivibrio fischeri (strain ATCC 700601 / ES114) (Vibrio fischeri).